The chain runs to 247 residues: GTP cyclohydrolase 1 type 2 homolog (247 aa).

His63, His64, Asp101, His215, and Glu219 together coordinate a divalent metal cation.

This sequence belongs to the GTP cyclohydrolase I type 2/NIF3 family. In terms of assembly, homohexamer.

This is GTP cyclohydrolase 1 type 2 homolog from Buchnera aphidicola subsp. Baizongia pistaciae (strain Bp).